The primary structure comprises 231 residues: DNA mismatch repair protein MutH (231 aa).

Belongs to the MutH family.

The protein resides in the cytoplasm. In terms of biological role, sequence-specific endonuclease that cleaves unmethylated GATC sequences. It is involved in DNA mismatch repair. The protein is DNA mismatch repair protein MutH of Shewanella woodyi (strain ATCC 51908 / MS32).